The following is a 257-amino-acid chain: UPF0246 protein BF4021 (257 aa).

It belongs to the UPF0246 family.

The sequence is that of UPF0246 protein BF4021 from Bacteroides fragilis (strain YCH46).